The sequence spans 331 residues: Cathepsin S (331 aa).

An N-terminal signal peptide occupies residues M1–A16. Residues Q17–K114 constitute a propeptide, activation peptide. Residue N104 is glycosylated (N-linked (GlcNAc...) asparagine). Cystine bridges form between C126–C224, C136–C180, C170–C213, and C272–C320. C139 is a catalytic residue. Residues H278 and N298 contribute to the active site.

It belongs to the peptidase C1 family.

The protein resides in the lysosome. The protein localises to the secreted. It is found in the cytoplasmic vesicle. It localises to the phagosome. It carries out the reaction Similar to cathepsin L, but with much less activity on Z-Phe-Arg-|-NHMec, and more activity on the Z-Val-Val-Arg-|-Xaa compound.. Thiol protease. Key protease responsible for the removal of the invariant chain from MHC class II molecules and MHC class II antigen presentation. The bond-specificity of this proteinase is in part similar to the specificities of cathepsin L. The polypeptide is Cathepsin S (CTSS) (Canis lupus familiaris (Dog)).